A 334-amino-acid chain; its full sequence is UL-16 binding protein 5 (334 aa).

An N-terminal signal peptide occupies residues 1–25 (MAAAASPAFLLRLPLLLLLSSWCRT). Over 26–223 (GLADPHSLCY…TMSSGTAQPR (198 aa)) the chain is Extracellular. The MHC class I alpha-1 like stretch occupies residues 29–117 (DPHSLCYDIT…IQLENYIPKE (89 aa)). A disulfide bond links Cys-50 and Cys-66. A glycan (N-linked (GlcNAc...) asparagine) is linked at Asn-82. The segment at 118–210 (PLTLQARMSC…MDSTLEPSAG (93 aa)) is MHC class I alpha-2 like. Cys-127 and Cys-190 are oxidised to a cystine. A lipid anchor (GPI-anchor amidated glycine) is attached at Gly-218. Residues 219–334 (TAQPRATATT…YSEPLQVSIS (116 aa)) constitute a propeptide, removed in mature form. A helical transmembrane segment spans residues 224 to 243 (ATATTLILCCLLIMCLLICS). Topologically, residues 244-334 (RHSLTQSHGH…YSEPLQVSIS (91 aa)) are cytoplasmic.

It belongs to the MHC class I family. Interacts with KLRK1/NKG2D. As to quaternary structure, (Microbial infection) In CMV-infected cells, interacts with the viral glycoprotein UL16; this interaction causes RAET1G retention in the endoplasmic reticulum and cis-Golgi and prevents binding to and activation of KLRK1/NKG2D, providing CMV with an immune evasion mechanism. Post-translationally, the functional form is cleaved C-terminally of the GPI-anchor and yields a 28 kDa protein. As to expression, isoform 1 is highly expressed in colon and in a number of tumor cell lines and highly restricted in normal tissues. Both isoforms are frequently expressed in cell lines derived from epithelial cancers, and in primary breast cancers.

The protein resides in the cell membrane. It is found in the endoplasmic reticulum. Its subcellular location is the secreted. In terms of biological role, binds and activates the KLRK1/NKG2D receptor, mediating natural killer cell cytotoxicity. Functionally, down-regulates the expression of KLRK1 and stimulates natural killer cells to secrete IFNG. Stimulates natural killer cells to secrete IFNG. The protein is UL-16 binding protein 5 of Homo sapiens (Human).